Reading from the N-terminus, the 284-residue chain is RNA polymerase sigma factor RpoH (284 aa).

The sigma-70 factor domain-2 stretch occupies residues 53-122; sequence LILSHLRFVI…IHEYVLRNWR (70 aa). Positions 77-80 match the Interaction with polymerase core subunit RpoC motif; that stretch reads DLIQ. A sigma-70 factor domain-4 region spans residues 228–280; that stretch reads ALLRLDERSRHIIHARWLDKNKKNTLQNIANNYGISAERVRQLEKNAMKKLKL. The H-T-H motif DNA-binding region spans 253 to 272; that stretch reads LQNIANNYGISAERVRQLEK.

It belongs to the sigma-70 factor family. RpoH subfamily. As to quaternary structure, interacts with the RNA polymerase core enzyme.

The protein localises to the cytoplasm. Functionally, sigma factors are initiation factors that promote the attachment of RNA polymerase to specific initiation sites and are then released. This sigma factor is involved in regulation of expression of heat shock genes. The polypeptide is RNA polymerase sigma factor RpoH (Buchnera aphidicola subsp. Acyrthosiphon pisum (strain APS) (Acyrthosiphon pisum symbiotic bacterium)).